A 474-amino-acid polypeptide reads, in one-letter code: Trigger factor (474 aa).

A PPIase FKBP-type domain is found at 165-250 (GDRVTIDYLG…VKTVSKPDEL (86 aa)). Positions 451–467 (VKKKTASDNKKSNEIKK) are enriched in basic and acidic residues. The disordered stretch occupies residues 451 to 474 (VKKKTASDNKKSNEIKKKSTMKKV).

Belongs to the FKBP-type PPIase family. Tig subfamily.

The protein localises to the cytoplasm. It carries out the reaction [protein]-peptidylproline (omega=180) = [protein]-peptidylproline (omega=0). Functionally, involved in protein export. Acts as a chaperone by maintaining the newly synthesized protein in an open conformation. Functions as a peptidyl-prolyl cis-trans isomerase. In Bartonella bacilliformis (strain ATCC 35685 / KC583 / Herrer 020/F12,63), this protein is Trigger factor.